A 634-amino-acid polypeptide reads, in one-letter code: SPARC-like protein 1 (634 aa).

A signal peptide spans 1–16 (MKAVLLLLYALGIAAA). A disordered region spans residues 50-335 (ADIEKHPNHK…DDSKHGASDD (286 aa)). The segment covering 51–62 (DIEKHPNHKAEK) has biased composition (basic and acidic residues). Phosphoserine is present on residues Ser68, Ser76, and Ser84. Over residues 73–83 (HEQSTEQDKTY) the composition is skewed to basic and acidic residues. A compositionally biased stretch (acidic residues) spans 89-99 (LKDEEDGDGDL). A compositionally biased stretch (polar residues) spans 131-144 (TVSTPFVDSDQPAN). N-linked (GlcNAc...) asparagine glycosylation is present at Asn144. Residues Ser151 and Ser159 each carry the phosphoserine modification. Composition is skewed to acidic residues over residues 189–198 (EKEEEEDPED) and 205–214 (NQEEEKEPPE). A compositionally biased stretch (polar residues) spans 233-258 (QESSQPTQISKTKNDFEQGSQGQEGD). Ser259 is subject to Phosphoserine. Composition is skewed to basic and acidic residues over residues 263-276 (GEDK…HLPH) and 292-303 (GNRKDTDEEKAV). 2 positions are modified to phosphoserine: Ser333 and Ser340. Residues 360–398 (EETPDESENRSEAGDNQGAKKAESSPNAEPSDEGNSRGH) are disordered. A compositionally biased stretch (basic and acidic residues) spans 366-382 (SENRSEAGDNQGAKKAE). An N-linked (GlcNAc...) asparagine glycan is attached at Asn368. A phosphoserine mark is found at Ser370 and Ser390. The 23-residue stretch at 402 to 424 (SCMNFQCKRGHTCKTDQHGKPHC) folds into the Follistatin-like domain. Intrachain disulfides connect Cys403–Cys414, Cys408–Cys424, Cys426–Cys460, Cys432–Cys453, Cys442–Cys479, Cys485–Cys596, and Cys604–Cys620. Positions 420–481 (GKPHCVCQDP…QLDYFGACKS (62 aa)) constitute a Kazal-like domain. A glycan (N-linked (GlcNAc...) asparagine) is linked at Asn446. The region spanning 592-627 (PMEHCITRFFEECDPNKDKHITLKEWGHCFGIKEED) is the EF-hand domain. Positions 605, 607, 609, 611, and 616 each coordinate Ca(2+).

The protein belongs to the SPARC family. Expressed in many types of neurons in the brain.

The protein localises to the secreted. It is found in the extracellular space. The protein resides in the extracellular matrix. This is SPARC-like protein 1 (Sparcl1) from Rattus norvegicus (Rat).